Consider the following 160-residue polypeptide: SsrA-binding protein (160 aa).

It belongs to the SmpB family.

It is found in the cytoplasm. Required for rescue of stalled ribosomes mediated by trans-translation. Binds to transfer-messenger RNA (tmRNA), required for stable association of tmRNA with ribosomes. tmRNA and SmpB together mimic tRNA shape, replacing the anticodon stem-loop with SmpB. tmRNA is encoded by the ssrA gene; the 2 termini fold to resemble tRNA(Ala) and it encodes a 'tag peptide', a short internal open reading frame. During trans-translation Ala-aminoacylated tmRNA acts like a tRNA, entering the A-site of stalled ribosomes, displacing the stalled mRNA. The ribosome then switches to translate the ORF on the tmRNA; the nascent peptide is terminated with the 'tag peptide' encoded by the tmRNA and targeted for degradation. The ribosome is freed to recommence translation, which seems to be the essential function of trans-translation. The polypeptide is SsrA-binding protein (Marinobacter nauticus (strain ATCC 700491 / DSM 11845 / VT8) (Marinobacter aquaeolei)).